We begin with the raw amino-acid sequence, 336 residues long: DNA-directed RNA polymerase subunit alpha (336 aa).

Residues M1–L234 form an alpha N-terminal domain (alpha-NTD) region. An alpha C-terminal domain (alpha-CTD) region spans residues V269 to E336.

The protein belongs to the RNA polymerase alpha chain family. As to quaternary structure, homodimer. The RNAP catalytic core consists of 2 alpha, 1 beta, 1 beta' and 1 omega subunit. When a sigma factor is associated with the core the holoenzyme is formed, which can initiate transcription.

The catalysed reaction is RNA(n) + a ribonucleoside 5'-triphosphate = RNA(n+1) + diphosphate. In terms of biological role, DNA-dependent RNA polymerase catalyzes the transcription of DNA into RNA using the four ribonucleoside triphosphates as substrates. The protein is DNA-directed RNA polymerase subunit alpha of Thermotoga petrophila (strain ATCC BAA-488 / DSM 13995 / JCM 10881 / RKU-1).